The following is a 159-amino-acid chain: Transcriptional repressor NrdR (159 aa).

The segment at 3-34 (CPYCQSEDTQVKDSRPAEDGAAIRRRRVCPDC) is a zinc-finger region. One can recognise an ATP-cone domain in the interval 49-139 (LVVVKKSGRK…VYRNFREAKD (91 aa)).

This sequence belongs to the NrdR family. It depends on Zn(2+) as a cofactor.

Its function is as follows. Negatively regulates transcription of bacterial ribonucleotide reductase nrd genes and operons by binding to NrdR-boxes. The chain is Transcriptional repressor NrdR from Mesorhizobium japonicum (strain LMG 29417 / CECT 9101 / MAFF 303099) (Mesorhizobium loti (strain MAFF 303099)).